Here is a 168-residue protein sequence, read N- to C-terminus: Small ribosomal subunit protein uS5c (168 aa).

Positions 17 to 80 (WQERVVQIRR…SDGKKKIVSV (64 aa)) constitute an S5 DRBM domain.

The protein belongs to the universal ribosomal protein uS5 family. Part of the 30S ribosomal subunit. Contacts protein S4.

The protein localises to the plastid. It localises to the chloroplast. Its function is as follows. With S4 and S12 plays an important role in translational accuracy. The chain is Small ribosomal subunit protein uS5c (rps5) from Rhodomonas salina (Cryptomonas salina).